The primary structure comprises 530 residues: GMP synthase [glutamine-hydrolyzing] (530 aa).

The Glutamine amidotransferase type-1 domain occupies 18-207 (TILVLDFGSQ…AVDICQAKTN (190 aa)). Cysteine 94 (nucleophile) is an active-site residue. Residues histidine 181 and glutamate 183 contribute to the active site. One can recognise a GMPS ATP-PPase domain in the interval 208-405 (WSMENFIDTE…LGVPEDLVWR (198 aa)). 236-242 (SGGVDST) contributes to the ATP binding site. Arginine 309, aspartate 467, lysine 522, and glutamate 528 together coordinate XMP.

Homodimer. Requires Mg(2+) as cofactor.

The protein resides in the cytoplasm. It localises to the cytosol. The catalysed reaction is XMP + L-glutamine + ATP + H2O = GMP + L-glutamate + AMP + diphosphate + 2 H(+). The protein operates within purine metabolism; GMP biosynthesis; GMP from XMP (L-Gln route): step 1/1. Functionally, catalyzes the conversion of xanthine monophosphate (XMP) to GMP in the presence of glutamine and ATP through an adenyl-XMP intermediate. This Candida albicans (strain SC5314 / ATCC MYA-2876) (Yeast) protein is GMP synthase [glutamine-hydrolyzing] (GUA1).